The chain runs to 283 residues: Probable endonuclease 4 (283 aa).

Zn(2+)-binding residues include H69, H109, E144, D178, H181, H215, D228, H230, and E260.

This sequence belongs to the AP endonuclease 2 family. It depends on Zn(2+) as a cofactor.

It carries out the reaction Endonucleolytic cleavage to 5'-phosphooligonucleotide end-products.. Its function is as follows. Endonuclease IV plays a role in DNA repair. It cleaves phosphodiester bonds at apurinic or apyrimidinic (AP) sites, generating a 3'-hydroxyl group and a 5'-terminal sugar phosphate. The protein is Probable endonuclease 4 of Thermosipho melanesiensis (strain DSM 12029 / CIP 104789 / BI429).